The following is an 802-amino-acid chain: Cell division cycle 5-like protein (802 aa).

HTH myb-type domains are found at residues 1–56 and 57–108; these read MPRI…WLDP and SIKK…DKAA. 2 consecutive DNA-binding regions (H-T-H motif) follow at residues 31-54 and 82-104; these read WSRI…YEWL and WRTI…EFLL. The disordered stretch occupies residues 108-143; the sequence is AQRDNEEETTDDPRKLKPGEIDPNPETKPARPDPID. A compositionally biased stretch (basic and acidic residues) spans 118 to 127; sequence DDPRKLKPGE. K135 is covalently cross-linked (Glycyl lysine isopeptide (Lys-Gly) (interchain with G-Cter in SUMO2)). The stretch at 142 to 245 forms a coiled coil; that stretch reads IDMDEDELEM…DADFRKLRQQ (104 aa). The Nuclear localization signal signature appears at 165–271; the sequence is KKAKRKAREK…KDKQHLKRKK (107 aa). Residues 200–206 form a required for interaction with CTNNBL1 region; sequence KKRKKKR. Residue K219 forms a Glycyl lysine isopeptide (Lys-Gly) (interchain with G-Cter in SUMO2) linkage. T227 carries the phosphothreonine modification. Over residues 246-262 the composition is skewed to basic and acidic residues; it reads DLDGELRSEKEGRDRKK. The interval 246 to 278 is disordered; sequence DLDGELRSEKEGRDRKKDKQHLKRKKESDLPSA. Residues 260-606 form an interaction with PPP1R8 region; it reads RKKDKQHLKR…NKKGKTVGFG (347 aa). 2 positions are modified to phosphoserine: S303 and S358. Residues T377, T385, T396, T404, T411, and T415 each carry the phosphothreonine modification. Over residues 409-418 the composition is skewed to polar residues; it reads LSTPFRTPSH. Positions 409–459 are disordered; it reads LSTPFRTPSHGSEGLTPRSGTTPKPVINSTPGRTPLRDKLNINPEDGMADY. S417 bears the Phosphoserine mark. Residues T424 and T430 each carry the phosphothreonine modification. A compositionally biased stretch (polar residues) spans 426–440; that stretch reads RSGTTPKPVINSTPG. The residue at position 437 (S437) is a Phosphoserine. T438 and T442 each carry phosphothreonine. Residue K487 forms a Glycyl lysine isopeptide (Lys-Gly) (interchain with G-Cter in SUMO2) linkage. Residues 501 to 659 form an interaction with DAPK3 region; it reads ELEEREIDDT…GELSSEAYNQ (159 aa). Coiled coils occupy residues 676 to 701 and 764 to 802; these read RYTR…INRG and PRRL…KAKF. The interaction with PLRG1 stretch occupies residues 706–800; sequence EAKRAAKMEK…LLLEKETLKA (95 aa).

The protein belongs to the CEF1 family. Homodimer. Interacts with DAPK3. Component of the precatalytic, catalytic and postcatalytic spliceosome complexes. Part of a spliceosomal 'core' complex consisting of CDC5L, PLRG1, SPF27, CCAP1, CCAP3 and CCAP6. Interacts with PLRG1, Lodestar/TTF2, and NIPP1/PPP1R8. Component of the minor spliceosome, which splices U12-type introns. Within this complex, interacts with SCNM1. Component of the PRP19-CDC5L splicing complex composed of a core complex comprising a homotetramer of PRPF19, CDC5L, PLRG1 and BCAS2, and at least three less stably associated proteins CTNNBL1, CWC15 and HSPA8. Interacts (via its C-terminus) directly in the complex with PRPF19 and BCAS2. Interacts (via its C-terminus) directly with PRGL1 (via its WD40 repeat domain); the interaction is required for mRNA splicing but not for spliceosome assembly. Also interacts with CTNNBL1. Interacts with PRPF19 (via N-terminus). Interacts with USB1. Interacts with DDX41. Post-translationally, phosphorylated on serine and threonine residues. Phosphorylation on Thr-411 and Thr-438 is required for CDC5L-mediated mRNA splicing. Has no effect on subcellular location nor on homodimerization. Phosphorylated in vitro by CDK2. Phosphorylation enhances interaction with PPP1R8.

The protein resides in the nucleus. It is found in the nucleus speckle. The protein localises to the cytoplasm. DNA-binding protein involved in cell cycle control. May act as a transcription activator. Plays a role in pre-mRNA splicing as core component of precatalytic, catalytic and postcatalytic spliceosomal complexes. Component of the PRP19-CDC5L complex that forms an integral part of the spliceosome and is required for activating pre-mRNA splicing. The PRP19-CDC5L complex may also play a role in the response to DNA damage (DDR). As a component of the minor spliceosome, involved in the splicing of U12-type introns in pre-mRNAs. In Bos taurus (Bovine), this protein is Cell division cycle 5-like protein (CDC5L).